The chain runs to 449 residues: Putative methylthiotransferase MJ0865 (449 aa).

Positions S163 to S390 constitute a Radical SAM core domain. Residues C177, C181, and C184 each coordinate [4Fe-4S] cluster.

This sequence belongs to the methylthiotransferase family. It depends on [4Fe-4S] cluster as a cofactor.

The polypeptide is Putative methylthiotransferase MJ0865 (Methanocaldococcus jannaschii (strain ATCC 43067 / DSM 2661 / JAL-1 / JCM 10045 / NBRC 100440) (Methanococcus jannaschii)).